Reading from the N-terminus, the 310-residue chain is Olfactory receptor 5H14 (310 aa).

Over 1-28 (MEEENATLLTEFVLTGFLYQPQWKIPLF) the chain is Extracellular. Asparagine 5 carries N-linked (GlcNAc...) asparagine glycosylation. A helical membrane pass occupies residues 29-49 (LAFLVIYLITIMGNLGLIAVI). The Cytoplasmic portion of the chain corresponds to 50 to 56 (WKDPHLH). The helical transmembrane segment at 57 to 77 (IPMYLLLGNLAFVDALLSSSV) threads the bilayer. Topologically, residues 78-98 (TLKMLINFLAKSKMISLSECK) are extracellular. A disulfide bond links cysteine 97 and cysteine 179. A helical transmembrane segment spans residues 99–119 (IQLFSFAISVTTECFLLATMA). Topologically, residues 120–143 (YDRYVAICKPLLYPAIMTNGLCIR) are cytoplasmic. Residues 144-164 (LLILSYVGGLLHALIHEGFLF) traverse the membrane as a helical segment. Over 165-195 (RLTFCNSNIIQHFYCDIIPLLKISYTDSSIN) the chain is Extracellular. The chain crosses the membrane as a helical span at residues 196–216 (FLMVFIFAGSIQVFTIGTVLI). Topologically, residues 217–240 (SYIFVLYTILKKKSVKGMRKAFST) are cytoplasmic. A helical membrane pass occupies residues 241 to 261 (CGAHLLSVSLYYGPLAFMYMG). Residues 262-271 (SASPQADDQD) are Extracellular-facing. A helical transmembrane segment spans residues 272–292 (MMESLFYTVIVPLLNPMIYSL). Over 293–310 (RNKQVIASFTKMFKRNDV) the chain is Cytoplasmic.

This sequence belongs to the G-protein coupled receptor 1 family.

It is found in the cell membrane. Its function is as follows. Odorant receptor. This Homo sapiens (Human) protein is Olfactory receptor 5H14 (OR5H14).